A 909-amino-acid polypeptide reads, in one-letter code: Cutinase transcription factor 1 alpha (909 aa).

Residues 1 to 51 (MSSGDAPPQAQPQPHQQEQPNQRQSSTPAPSAAPVPPAPSTSTSNSAGGVS) form a disordered region. Low complexity predominate over residues 12–30 (PQPHQQEQPNQRQSSTPAP). Positions 61-90 (CETCHARKVRCDAASLGVPCTNCVAFQIEC) form a DNA-binding region, zn(2)-C6 fungal-type. 3 disordered regions span residues 95 to 159 (PKRK…EAQA), 651 to 757 (AEGK…SFSV), and 841 to 878 (LPQG…QGQA). The span at 110 to 119 (KDSDSDRGDG) shows a compositional bias: basic and acidic residues. The span at 142–156 (VFHSHNGTPPTTLTE) shows a compositional bias: polar residues. Positions 669–683 (QHSRQQEAPKRKYDE) are enriched in basic and acidic residues. Polar residues-rich tracts occupy residues 704–717 (PQTP…TSSM), 737–755 (GGTN…NPSF), and 865–878 (SPDS…QGQA).

The protein resides in the nucleus. The chain is Cutinase transcription factor 1 alpha (CTF1-ALPHA) from Fusarium vanettenii (Neocosmospora pisi).